The chain runs to 173 residues: Large ribosomal subunit protein bL9 (173 aa).

Residues 151 to 173 form a disordered region; the sequence is YDDTPDRTETEESTKELQEEHAE.

Belongs to the bacterial ribosomal protein bL9 family.

Functionally, binds to the 23S rRNA. The sequence is that of Large ribosomal subunit protein bL9 from Lawsonia intracellularis (strain PHE/MN1-00).